Consider the following 1162-residue polypeptide: Cartilage intermediate layer protein 2 (1162 aa).

A signal peptide spans 1 to 20; it reads MASPLPLLYLCLAALHLAGA. The disordered stretch occupies residues 23–51; it reads ATPTEEHTSTARGLQGRPPDTGQPSPALE. The 52-residue stretch at 146 to 197 folds into the TSP type-1 domain; the sequence is EAAWGAWGAWGLCSKSCGLGRRLRRRSCQSSSGDTCPGSPQEAQKCVRSRCP. 4 disulfides stabilise this stretch: cysteine 158-cysteine 191, cysteine 162-cysteine 196, cysteine 173-cysteine 181, and cysteine 314-cysteine 360. The 85-residue stretch at 293–377 folds into the Ig-like C2-type domain; it reads PYLVKHPESR…TVRSRAALLT (85 aa). A glycan (N-linked (GlcNAc...) asparagine) is linked at asparagine 330.

Post-translationally, may be cleaved into 2 chains possibly by a furin-like protease upon or preceding secretion. In terms of processing, N-glycosylated. As to expression, expressed in articulated and meniscal cartilage (at protein level). Also detected in heart, skeletal muscle and brain. Not detected in growth plate cartilage.

It is found in the secreted. It localises to the extracellular space. The protein localises to the extracellular matrix. May play a role in cartilage scaffolding. The protein is Cartilage intermediate layer protein 2 of Mus musculus (Mouse).